Here is a 364-residue protein sequence, read N- to C-terminus: Probable dual-specificity RNA methyltransferase RlmN (364 aa).

The active-site Proton acceptor is the glutamate 107. The 234-residue stretch at 113–346 (HNYGNSVCVT…VTIRREHGHD (234 aa)) folds into the Radical SAM core domain. The cysteines at positions 120 and 351 are disulfide-linked. 3 residues coordinate [4Fe-4S] cluster: cysteine 127, cysteine 131, and cysteine 134. S-adenosyl-L-methionine is bound by residues 177–178 (GE), serine 209, 232–234 (SLH), and asparagine 308. Cysteine 351 serves as the catalytic S-methylcysteine intermediate.

Belongs to the radical SAM superfamily. RlmN family. [4Fe-4S] cluster serves as cofactor.

The protein resides in the cytoplasm. It carries out the reaction adenosine(2503) in 23S rRNA + 2 reduced [2Fe-2S]-[ferredoxin] + 2 S-adenosyl-L-methionine = 2-methyladenosine(2503) in 23S rRNA + 5'-deoxyadenosine + L-methionine + 2 oxidized [2Fe-2S]-[ferredoxin] + S-adenosyl-L-homocysteine. The enzyme catalyses adenosine(37) in tRNA + 2 reduced [2Fe-2S]-[ferredoxin] + 2 S-adenosyl-L-methionine = 2-methyladenosine(37) in tRNA + 5'-deoxyadenosine + L-methionine + 2 oxidized [2Fe-2S]-[ferredoxin] + S-adenosyl-L-homocysteine. In terms of biological role, specifically methylates position 2 of adenine 2503 in 23S rRNA and position 2 of adenine 37 in tRNAs. In Geobacillus thermodenitrificans (strain NG80-2), this protein is Probable dual-specificity RNA methyltransferase RlmN.